We begin with the raw amino-acid sequence, 356 residues long: Heat-inducible transcription repressor HrcA (356 aa).

Belongs to the HrcA family.

Functionally, negative regulator of class I heat shock genes (grpE-dnaK-dnaJ and groELS operons). Prevents heat-shock induction of these operons. The protein is Heat-inducible transcription repressor HrcA of Chlorobaculum parvum (strain DSM 263 / NCIMB 8327) (Chlorobium vibrioforme subsp. thiosulfatophilum).